A 150-amino-acid polypeptide reads, in one-letter code: Urease subunit beta (150 aa).

The segment covering 122–140 (GAVVGDSPAATPGTTGATG) has biased composition (low complexity). The interval 122-150 (GAVVGDSPAATPGTTGATGDLPGYLGEGS) is disordered.

The protein belongs to the urease beta subunit family. As to quaternary structure, heterotrimer of UreA (gamma), UreB (beta) and UreC (alpha) subunits. Three heterotrimers associate to form the active enzyme.

The protein resides in the cytoplasm. It carries out the reaction urea + 2 H2O + H(+) = hydrogencarbonate + 2 NH4(+). Its pathway is nitrogen metabolism; urea degradation; CO(2) and NH(3) from urea (urease route): step 1/1. In Frankia alni (strain DSM 45986 / CECT 9034 / ACN14a), this protein is Urease subunit beta.